Consider the following 229-residue polypeptide: Putative N-acetylmannosamine-6-phosphate 2-epimerase (229 aa).

This sequence belongs to the NanE family.

The catalysed reaction is an N-acyl-D-glucosamine 6-phosphate = an N-acyl-D-mannosamine 6-phosphate. It participates in amino-sugar metabolism; N-acetylneuraminate degradation; D-fructose 6-phosphate from N-acetylneuraminate: step 3/5. Functionally, converts N-acetylmannosamine-6-phosphate (ManNAc-6-P) to N-acetylglucosamine-6-phosphate (GlcNAc-6-P). This is Putative N-acetylmannosamine-6-phosphate 2-epimerase from Escherichia coli O139:H28 (strain E24377A / ETEC).